A 346-amino-acid polypeptide reads, in one-letter code: Elongation factor Ts (346 aa).

The interval 80 to 83 (TDFV) is involved in Mg(2+) ion dislocation from EF-Tu.

Belongs to the EF-Ts family.

It is found in the cytoplasm. In terms of biological role, associates with the EF-Tu.GDP complex and induces the exchange of GDP to GTP. It remains bound to the aminoacyl-tRNA.EF-Tu.GTP complex up to the GTP hydrolysis stage on the ribosome. This Streptococcus pyogenes serotype M1 protein is Elongation factor Ts.